Reading from the N-terminus, the 560-residue chain is Dihydroxy-acid dehydratase (560 aa).

Residue cysteine 52 coordinates [2Fe-2S] cluster. Aspartate 84 provides a ligand contact to Mg(2+). Cysteine 125 is a binding site for [2Fe-2S] cluster. Aspartate 126 and lysine 127 together coordinate Mg(2+). N6-carboxylysine is present on lysine 127. Residue cysteine 197 participates in [2Fe-2S] cluster binding. Residue glutamate 448 participates in Mg(2+) binding. The Proton acceptor role is filled by serine 474.

The protein belongs to the IlvD/Edd family. Homodimer. [2Fe-2S] cluster is required as a cofactor. Requires Mg(2+) as cofactor.

The catalysed reaction is (2R)-2,3-dihydroxy-3-methylbutanoate = 3-methyl-2-oxobutanoate + H2O. The enzyme catalyses (2R,3R)-2,3-dihydroxy-3-methylpentanoate = (S)-3-methyl-2-oxopentanoate + H2O. It participates in amino-acid biosynthesis; L-isoleucine biosynthesis; L-isoleucine from 2-oxobutanoate: step 3/4. Its pathway is amino-acid biosynthesis; L-valine biosynthesis; L-valine from pyruvate: step 3/4. Functions in the biosynthesis of branched-chain amino acids. Catalyzes the dehydration of (2R,3R)-2,3-dihydroxy-3-methylpentanoate (2,3-dihydroxy-3-methylvalerate) into 2-oxo-3-methylpentanoate (2-oxo-3-methylvalerate) and of (2R)-2,3-dihydroxy-3-methylbutanoate (2,3-dihydroxyisovalerate) into 2-oxo-3-methylbutanoate (2-oxoisovalerate), the penultimate precursor to L-isoleucine and L-valine, respectively. The sequence is that of Dihydroxy-acid dehydratase from Leptospira borgpetersenii serovar Hardjo-bovis (strain JB197).